Reading from the N-terminus, the 426-residue chain is Glutamyl-tRNA reductase (426 aa).

Substrate-binding positions include 49–52 (TCNR), serine 109, 114–116 (EGQ), and glutamine 120. Residue cysteine 50 is the Nucleophile of the active site. 189 to 194 (GAGETG) provides a ligand contact to NADP(+).

This sequence belongs to the glutamyl-tRNA reductase family. As to quaternary structure, homodimer.

It catalyses the reaction (S)-4-amino-5-oxopentanoate + tRNA(Glu) + NADP(+) = L-glutamyl-tRNA(Glu) + NADPH + H(+). It functions in the pathway porphyrin-containing compound metabolism; protoporphyrin-IX biosynthesis; 5-aminolevulinate from L-glutamyl-tRNA(Glu): step 1/2. In terms of biological role, catalyzes the NADPH-dependent reduction of glutamyl-tRNA(Glu) to glutamate 1-semialdehyde (GSA). The sequence is that of Glutamyl-tRNA reductase (hemA) from Chlorobaculum parvum (strain DSM 263 / NCIMB 8327) (Chlorobium vibrioforme subsp. thiosulfatophilum).